The primary structure comprises 237 residues: Orotidine 5'-phosphate decarboxylase (237 aa).

Residues D11, K34, 61–70, T124, R186, Q195, G215, and R216 each bind substrate; that span reads DLKLHDIPNT. The active-site Proton donor is K63.

This sequence belongs to the OMP decarboxylase family. Type 1 subfamily. Homodimer.

The catalysed reaction is orotidine 5'-phosphate + H(+) = UMP + CO2. It functions in the pathway pyrimidine metabolism; UMP biosynthesis via de novo pathway; UMP from orotate: step 2/2. Catalyzes the decarboxylation of orotidine 5'-monophosphate (OMP) to uridine 5'-monophosphate (UMP). The sequence is that of Orotidine 5'-phosphate decarboxylase from Lactococcus lactis subsp. cremoris (strain SK11).